A 481-amino-acid polypeptide reads, in one-letter code: ATP synthase subunit beta (481 aa).

ATP is bound at residue 160 to 167 (GGAGVGKT).

This sequence belongs to the ATPase alpha/beta chains family. F-type ATPases have 2 components, CF(1) - the catalytic core - and CF(0) - the membrane proton channel. CF(1) has five subunits: alpha(3), beta(3), gamma(1), delta(1), epsilon(1). CF(0) has three main subunits: a(1), b(2) and c(9-12). The alpha and beta chains form an alternating ring which encloses part of the gamma chain. CF(1) is attached to CF(0) by a central stalk formed by the gamma and epsilon chains, while a peripheral stalk is formed by the delta and b chains.

It localises to the cell inner membrane. The catalysed reaction is ATP + H2O + 4 H(+)(in) = ADP + phosphate + 5 H(+)(out). In terms of biological role, produces ATP from ADP in the presence of a proton gradient across the membrane. The catalytic sites are hosted primarily by the beta subunits. This Myxococcus xanthus (strain DK1622) protein is ATP synthase subunit beta.